The following is a 520-amino-acid chain: Acetyltransferase MAT1 (520 aa).

Residues H183 and D456 each act as proton acceptor in the active site.

It belongs to the plant acyltransferase family.

Its pathway is secondary metabolite biosynthesis. Its function is as follows. Acyl-CoA-dependent acyltransferase; part of the gene cluster that mediates the biosynthesis of mannosylerythritol lipids (MELs), surface-active substances that enhance the availability of water-insoluble substrates. Depending on the number of acetyl groups, mannosylerythritol lipids can be differentiated into MEL A (fully acetylated), MEL B and MEL C (monoacetylated at R-6 and R-4, respectively), and the fully deacetylated MEL D. The first step in the pathway is the generation of mannosylerythritol by the glycosyltransferase EMT1 which catalyzes the transfer of GDP-mannose to the C-4 atom of meso-erythritol. This reaction has to be stereospecific, since only mannosyl-D-erythritol is generated. The produced disaccharide is subsequently acylated with fatty acids of various lengths by the acyltransferases MAC1 and MAC2 at positions C-2 and C-3, repectively. The existence of MEL derivatives which carry an acetyl group at C-2 implies that at least MAC1 also accepts acetyl-CoA as a donor. The final step of MEL biosynthesis is the acetylation of the fully acylated mannosylerythritol lipids catalyzed by the acetyl-CoA-dependent acetyltransferase MAT1. MAT1 displays a relaxed regioselectivity and is able to transfer acetylgroups to both positions C-4 and C-6 of the mannosyl moiety. The protein is Acetyltransferase MAT1 of Pseudozyma antarctica (strain T-34) (Yeast).